The chain runs to 67 residues: SPbeta prophage-derived uncharacterized protein YopZ (67 aa).

A coiled-coil region spans residues 1 to 40 (MTSEMQLQAQIDVIEKENKELRRRNEELGQTVECQNKQIV). The chain crosses the membrane as a helical span at residues 44 to 66 (WRLLFFASSWIVYGIVSAIKYLW).

Its subcellular location is the cell membrane. The sequence is that of SPbeta prophage-derived uncharacterized protein YopZ (yopZ) from Bacillus subtilis (strain 168).